The chain runs to 220 residues: Inner membrane-spanning protein YciB (220 aa).

6 helical membrane-spanning segments follow: residues 20–40 (EVPP…FFFA), 57–77 (IGAP…IALA), 86–106 (LPIM…LTLW), 123–143 (LFGG…GYVF), 156–176 (KLTL…EIVW), and 187–207 (FKVW…MPLI).

Belongs to the YciB family.

The protein localises to the cell inner membrane. Its function is as follows. Plays a role in cell envelope biogenesis, maintenance of cell envelope integrity and membrane homeostasis. The chain is Inner membrane-spanning protein YciB from Brucella melitensis biotype 2 (strain ATCC 23457).